We begin with the raw amino-acid sequence, 476 residues long: Probable protein S-acyltransferase 5 (476 aa).

Residues 1–11 (MLDLQPSDRRH) show a composition bias toward basic and acidic residues. A disordered region spans residues 1 to 21 (MLDLQPSDRRHGAPSSSGGVS). The next 2 membrane-spanning stretches (helical) occupy residues 53 to 73 (SILI…IFVG) and 85 to 105 (GVSV…FLLL). The interval 119–138 (YPPEPESNEGNGEPRLAHTP) is disordered. The region spanning 158-208 (KYCDTCMLYRPPRASHCSICNNCVEKFDHHCPWLGQCIGLRNYRFYFMFVL) is the DHHC domain. Cysteine 188 (S-palmitoyl cysteine intermediate) is an active-site residue. The next 2 helical transmembrane spans lie at 209–223 (CSTL…FCWI) and 246–266 (SIAL…LTCF). Disordered regions lie at residues 320–340 (SKEP…PSLQ) and 373–454 (VASR…ASRD). Serine 336 carries the phosphoserine modification. Residues 387-412 (SEGRGIMHSRESSRGRGIMHSRESSR) are compositionally biased toward basic and acidic residues. At serine 418 the chain carries Phosphoserine. The segment covering 425 to 441 (VNEDLRTRDESVSRVGE) has biased composition (basic and acidic residues).

The protein belongs to the DHHC palmitoyltransferase family.

The protein localises to the cell membrane. The enzyme catalyses L-cysteinyl-[protein] + hexadecanoyl-CoA = S-hexadecanoyl-L-cysteinyl-[protein] + CoA. Functionally, palmitoyl acyltransferase. The protein is Probable protein S-acyltransferase 5 (PAT05) of Arabidopsis thaliana (Mouse-ear cress).